A 428-amino-acid chain; its full sequence is Enolase (428 aa).

(2R)-2-phosphoglycerate is bound at residue Gln163. The active-site Proton donor is Glu205. Mg(2+) contacts are provided by Asp242, Glu286, and Asp313. The (2R)-2-phosphoglycerate site is built by Lys338, Arg367, Ser368, and Lys389. Lys338 acts as the Proton acceptor in catalysis.

This sequence belongs to the enolase family. Requires Mg(2+) as cofactor.

It localises to the cytoplasm. Its subcellular location is the secreted. The protein resides in the cell surface. The catalysed reaction is (2R)-2-phosphoglycerate = phosphoenolpyruvate + H2O. The protein operates within carbohydrate degradation; glycolysis; pyruvate from D-glyceraldehyde 3-phosphate: step 4/5. Its function is as follows. Catalyzes the reversible conversion of 2-phosphoglycerate (2-PG) into phosphoenolpyruvate (PEP). It is essential for the degradation of carbohydrates via glycolysis. This chain is Enolase, found in Bordetella bronchiseptica (strain ATCC BAA-588 / NCTC 13252 / RB50) (Alcaligenes bronchisepticus).